The primary structure comprises 82 residues: Sulfur carrier protein TusA (82 aa).

The active-site Cysteine persulfide intermediate is Cys-19.

The protein belongs to the sulfur carrier protein TusA family. Interacts with IscS.

Its subcellular location is the cytoplasm. The protein operates within tRNA modification. In terms of biological role, sulfur carrier protein involved in sulfur trafficking in the cell. Part of a sulfur-relay system required for 2-thiolation during synthesis of 2-thiouridine of the modified wobble base 5-methylaminomethyl-2-thiouridine (mnm(5)s(2)U) in tRNA. Interacts with IscS and stimulates its cysteine desulfurase activity. Accepts an activated sulfur from IscS, which is then transferred to TusD, and thus determines the direction of sulfur flow from IscS to 2-thiouridine formation. Also appears to be involved in sulfur transfer for the biosynthesis of molybdopterin. The protein is Sulfur carrier protein TusA of Edwardsiella ictaluri (strain 93-146).